We begin with the raw amino-acid sequence, 700 residues long: Phosphoribosylformylglycinamidine synthase subunit PurL (700 aa).

The active site involves His-34. ATP is bound at residue Tyr-37. Residue Glu-79 coordinates Mg(2+). Substrate contacts are provided by residues 80-83 (SHNH) and Arg-102. His-81 (proton acceptor) is an active-site residue. Asp-103 contributes to the Mg(2+) binding site. Gln-227 is a substrate binding site. A Mg(2+)-binding site is contributed by Asp-255. Substrate is bound at residue 299-301 (ESQ). The ATP site is built by Asp-476 and Gly-513. Asn-514 provides a ligand contact to Mg(2+). Ser-516 contacts substrate.

Belongs to the FGAMS family. Monomer. Part of the FGAM synthase complex composed of 1 PurL, 1 PurQ and 2 PurS subunits.

The protein localises to the cytoplasm. It carries out the reaction N(2)-formyl-N(1)-(5-phospho-beta-D-ribosyl)glycinamide + L-glutamine + ATP + H2O = 2-formamido-N(1)-(5-O-phospho-beta-D-ribosyl)acetamidine + L-glutamate + ADP + phosphate + H(+). Its pathway is purine metabolism; IMP biosynthesis via de novo pathway; 5-amino-1-(5-phospho-D-ribosyl)imidazole from N(2)-formyl-N(1)-(5-phospho-D-ribosyl)glycinamide: step 1/2. In terms of biological role, part of the phosphoribosylformylglycinamidine synthase complex involved in the purines biosynthetic pathway. Catalyzes the ATP-dependent conversion of formylglycinamide ribonucleotide (FGAR) and glutamine to yield formylglycinamidine ribonucleotide (FGAM) and glutamate. The FGAM synthase complex is composed of three subunits. PurQ produces an ammonia molecule by converting glutamine to glutamate. PurL transfers the ammonia molecule to FGAR to form FGAM in an ATP-dependent manner. PurS interacts with PurQ and PurL and is thought to assist in the transfer of the ammonia molecule from PurQ to PurL. This is Phosphoribosylformylglycinamidine synthase subunit PurL from Halobacterium salinarum (strain ATCC 29341 / DSM 671 / R1).